Consider the following 289-residue polypeptide: Protease HtpX homolog (289 aa).

2 helical membrane passes run 10–30 (TAAL…VIGS) and 34–54 (STTP…YGYW). His-138 is a Zn(2+) binding site. Glu-139 is a catalytic residue. A Zn(2+)-binding site is contributed by His-142. A run of 2 helical transmembrane segments spans residues 153–173 (VAAA…IFGG) and 182–202 (LAVM…QSAI). Residue Glu-207 coordinates Zn(2+).

This sequence belongs to the peptidase M48B family. Zn(2+) is required as a cofactor.

The protein localises to the cell membrane. The polypeptide is Protease HtpX homolog (Arthrobacter sp. (strain FB24)).